A 205-amino-acid polypeptide reads, in one-letter code: Hydrogenase-4 component A (205 aa).

4Fe-4S ferredoxin-type domains follow at residues 2–31 (NRFV…TQGL), 41–72 (KTST…SQRD), 73–102 (DAIQ…ASGS), and 140–172 (QTVA…LITG). [4Fe-4S] cluster-binding residues include Cys12, Cys15, Cys18, Cys22, Cys51, Cys54, Cys59, Cys63, Cys82, Cys85, Cys88, Cys92, Cys146, Cys149, Cys158, and Cys162.

[4Fe-4S] cluster is required as a cofactor.

Its function is as follows. Probable electron transfer protein for hydrogenase 4. The protein is Hydrogenase-4 component A of Escherichia coli (strain K12).